A 649-amino-acid chain; its full sequence is Glucan endo-1,3-beta-glucosidase btgC (649 aa).

2 disordered regions span residues 1 to 50 (MGDR…AHTH) and 110 to 224 (YHTT…AGGA). The Cytoplasmic portion of the chain corresponds to 1-274 (MGDRSEQYGD…PRPSGASRKR (274 aa)). Residues 144–157 (GSSAALSAAGAPAG) show a composition bias toward low complexity. The segment covering 198 to 208 (NPDDILDDGDD) has biased composition (acidic residues). The chain crosses the membrane as a helical; Signal-anchor for type II membrane protein span at residues 275-295 (GWIIGGILAFIVIGAIVGGAV). Over 296 to 649 (GGTLGNRRSE…IPDCGGKTAA (354 aa)) the chain is Extracellular. Positions 301-329 (NRRSETASESSEVSADDDTETNGDLDKNS) are disordered. Acidic residues predominate over residues 314–323 (SADDDTETNG). N-linked (GlcNAc...) asparagine glycans are attached at residues Asn369, Asn392, and Asn420. Glu452 serves as the catalytic Proton donor. Glu551 serves as the catalytic Nucleophile. Asn596 is a glycosylation site (N-linked (GlcNAc...) asparagine).

This sequence belongs to the glycosyl hydrolase 17 family.

The protein localises to the cell membrane. The catalysed reaction is Hydrolysis of (1-&gt;3)-beta-D-glucosidic linkages in (1-&gt;3)-beta-D-glucans.. Functionally, glucanases play a role in cell expansion during growth, in cell-cell fusion during mating, and in spore release during sporulation. This enzyme may be involved in beta-glucan degradation. Active on laminarin and lichenan. This is Glucan endo-1,3-beta-glucosidase btgC (btgC) from Emericella nidulans (strain FGSC A4 / ATCC 38163 / CBS 112.46 / NRRL 194 / M139) (Aspergillus nidulans).